The primary structure comprises 356 residues: Vanillin synthase, chloroplastic (356 aa).

N-linked (GlcNAc...) asparagine glycosylation is present at asparagine 122. Intrachain disulfides connect cysteine 159–cysteine 202 and cysteine 193–cysteine 235. Residue cysteine 162 is part of the active site. Residue asparagine 251 is glycosylated (N-linked (GlcNAc...) asparagine). A disulfide bridge links cysteine 293 with cysteine 343. Active-site residues include histidine 302 and asparagine 322.

It belongs to the peptidase C1 family. As to quaternary structure, forms homodimers, homotrimers and homotetramers. As to expression, accumulates in the inner part of vanilla pods (at protein level). Expressed in single cells located a few cell layers from the inner epidermis.

The protein resides in the plastid. It localises to the chloroplast. It carries out the reaction (E)-ferulate + H2O = vanillin + acetate. The enzyme catalyses 4-O-beta-D-glucosyl-trans-ferulate + H2O = 4-O-beta-D-glucosyl-vanillin + acetate. It functions in the pathway aromatic compound metabolism; phenylpropanoid biosynthesis. Involved in the biosynthesis of vanillin (4-hydroxy-3-methoxy-benzaldehyde) and derivative natural products, key components of vanilla pods flavor. Catalyzes the double carbon bond cleavage of ferulic acid to vanillin and of their respective glucosides via a coupled non-oxidative hydratase/lyase reaction. Inactive toward p-coumaric acid, caffeic acid and their glucosides derivatives. This is Vanillin synthase, chloroplastic from Vanilla planifolia (Vanilla).